The chain runs to 518 residues: DNA-(apurinic or apyrimidinic site) endonuclease 2 (518 aa).

N8 and E48 together coordinate Mg(2+). Y156 is an active-site residue. Mg(2+)-binding residues include D197, N199, D303, and H304. D197 functions as the Proton donor/acceptor in the catalytic mechanism. The Proton acceptor role is filled by H304. The segment covering S355 to Q405 has biased composition (polar residues). Residues S355 to S407 are disordered. A Glycyl lysine isopeptide (Lys-Gly) (interchain with G-Cter in ubiquitin) cross-link involves residue K371. The tract at residues Q390–F397 is required for the interaction and colocalization with PCNA in nuclear foci in presence of oxidative-induced DNA damaging agents. Zn(2+) is bound by residues C469, H472, C495, and C509. The GRF-type zinc finger occupies C469 to S518.

The protein belongs to the DNA repair enzymes AP/ExoA family. In terms of assembly, interacts with PCNA; this interaction is triggered by reactive oxygen species and increased by misincorporation of uracil in nuclear DNA. Requires Mg(2+) as cofactor. The cofactor is Mn(2+). In terms of processing, ubiquitinated by the CUL9-RBX1 complex. Ubiquitinated by MKRN3 at Lys-371 leading to proteasomal degradation. Highly expressed in brain and kidney. Weakly expressed in the fetal brain.

The protein resides in the nucleus. Its subcellular location is the cytoplasm. It localises to the mitochondrion. The enzyme catalyses Exonucleolytic cleavage in the 3'- to 5'-direction to yield nucleoside 5'-phosphates.. Its activity is regulated as follows. 3'-5' exonuclease activity is activated by sodium and manganese. 3'-5' exonuclease and 3'-phosphodiesterase activities are stimulated in presence of PCNA. Functionally, functions as a weak apurinic/apyrimidinic (AP) endodeoxyribonuclease in the DNA base excision repair (BER) pathway of DNA lesions induced by oxidative and alkylating agents. Initiates repair of AP sites in DNA by catalyzing hydrolytic incision of the phosphodiester backbone immediately adjacent to the damage, generating a single-strand break with 5'-deoxyribose phosphate and 3'-hydroxyl ends. Also displays double-stranded DNA 3'-5' exonuclease, 3'-phosphodiesterase activities. Shows robust 3'-5' exonuclease activity on 3'-recessed heteroduplex DNA and is able to remove mismatched nucleotides preferentially. Also exhibits 3'-5' exonuclease activity on a single nucleotide gap containing heteroduplex DNA and on blunt-ended substrates. Shows fairly strong 3'-phosphodiesterase activity involved in the removal of 3'-damaged termini formed in DNA by oxidative agents. In the nucleus functions in the PCNA-dependent BER pathway. Plays a role in reversing blocked 3' DNA ends, problematic lesions that preclude DNA synthesis. Required for somatic hypermutation (SHM) and DNA cleavage step of class switch recombination (CSR) of immunoglobulin genes. Required for proper cell cycle progression during proliferation of peripheral lymphocytes. The chain is DNA-(apurinic or apyrimidinic site) endonuclease 2 (APEX2) from Homo sapiens (Human).